A 318-amino-acid chain; its full sequence is Glycine--tRNA ligase alpha subunit (318 aa).

Belongs to the class-II aminoacyl-tRNA synthetase family. Tetramer of two alpha and two beta subunits.

The protein localises to the cytoplasm. It carries out the reaction tRNA(Gly) + glycine + ATP = glycyl-tRNA(Gly) + AMP + diphosphate. This Methylibium petroleiphilum (strain ATCC BAA-1232 / LMG 22953 / PM1) protein is Glycine--tRNA ligase alpha subunit.